The primary structure comprises 652 residues: Acetyl-coenzyme A synthetase (652 aa).

Residues 191 to 194 (RAGR), T311, and N335 contribute to the CoA site. ATP contacts are provided by residues 387–389 (GEP), 411–416 (DTWWQT), D500, and R515. S523 serves as a coordination point for CoA. ATP is bound at residue R526. V537, H539, and I542 together coordinate Mg(2+). Position 584 (R584) interacts with CoA. K609 carries the N6-acetyllysine modification.

Belongs to the ATP-dependent AMP-binding enzyme family. The cofactor is Mg(2+). Post-translationally, acetylated. Deacetylation by the SIR2-homolog deacetylase activates the enzyme.

The enzyme catalyses acetate + ATP + CoA = acetyl-CoA + AMP + diphosphate. In terms of biological role, catalyzes the conversion of acetate into acetyl-CoA (AcCoA), an essential intermediate at the junction of anabolic and catabolic pathways. Acs undergoes a two-step reaction. In the first half reaction, Acs combines acetate with ATP to form acetyl-adenylate (AcAMP) intermediate. In the second half reaction, it can then transfer the acetyl group from AcAMP to the sulfhydryl group of CoA, forming the product AcCoA. Enables the cell to use acetate during aerobic growth to generate energy via the TCA cycle, and biosynthetic compounds via the glyoxylate shunt. Acetylates CheY, the response regulator involved in flagellar movement and chemotaxis. This is Acetyl-coenzyme A synthetase from Escherichia coli O157:H7.